The primary structure comprises 371 residues: Glutamate 5-kinase (371 aa).

Lys12 provides a ligand contact to ATP. Ser52, Asp136, and Asn148 together coordinate substrate. Residues 168–169 (SD) and 210–216 (TGGMRTK) each bind ATP. The region spanning 275-354 (QGEILVDEGA…EDIAEKFGYS (80 aa)) is the PUA domain.

The protein belongs to the glutamate 5-kinase family.

The protein resides in the cytoplasm. The catalysed reaction is L-glutamate + ATP = L-glutamyl 5-phosphate + ADP. Its pathway is amino-acid biosynthesis; L-proline biosynthesis; L-glutamate 5-semialdehyde from L-glutamate: step 1/2. Its function is as follows. Catalyzes the transfer of a phosphate group to glutamate to form L-glutamate 5-phosphate. In Idiomarina loihiensis (strain ATCC BAA-735 / DSM 15497 / L2-TR), this protein is Glutamate 5-kinase.